Consider the following 363-residue polypeptide: MVSVDTPSSLGKPRGDPRQLYRVGGWDEEIYVLGIESTAHTFGVGIASTKPPYILVSVRDTYHPPKGGIHPREAASHHARVASEVILDALRTVGLSIRDIDAVAVALGPGLGPALRVGATIARGLAAYYGKPLVPVNHAVAHIEIARLYTGLGDPVVLYVSGGNTVVAAYAKARYRVFGETLDIALGNLLDTFARDAGIAPPYIVSGLHIVDRCAEAASKPADLPYVVKGMDVSFSGLLTAALRLWTKAGSEDEKAAVCLGLREVAYGSVVEVTERALAHTRKKSVMLTGGVAASPILRNKVRSMASYHGAVADWPPPQLAGDNGAMIAWTGLLNYLAGITVDVEESVVKQRWRLDVVEIPWR.

Fe cation contacts are provided by histidine 138, histidine 142, and tyrosine 159. Residues 159–163 (YVSGG), aspartate 191, aspartate 212, and serine 295 contribute to the substrate site. Aspartate 323 lines the Fe cation pocket.

It belongs to the KAE1 / TsaD family. Fe(2+) serves as cofactor.

It is found in the cytoplasm. The catalysed reaction is L-threonylcarbamoyladenylate + adenosine(37) in tRNA = N(6)-L-threonylcarbamoyladenosine(37) in tRNA + AMP + H(+). Its function is as follows. Required for the formation of a threonylcarbamoyl group on adenosine at position 37 (t(6)A37) in tRNAs that read codons beginning with adenine. Is probably involved in the transfer of the threonylcarbamoyl moiety of threonylcarbamoyl-AMP (TC-AMP) to the N6 group of A37. This Hyperthermus butylicus (strain DSM 5456 / JCM 9403 / PLM1-5) protein is tRNA N6-adenosine threonylcarbamoyltransferase.